The sequence spans 229 residues: Artemin (229 aa).

A1 carries the post-translational modification N-acetylalanine. The 149-residue stretch at 25–173 folds into the Ferritin-like diiron domain; that stretch reads HNFDPECEKA…DCLSNLHCIG (149 aa).

It belongs to the ferritin family.

The polypeptide is Artemin (Artemia salina (Brine shrimp)).